Reading from the N-terminus, the 323-residue chain is Tetraacyldisaccharide 4'-kinase (323 aa).

56–63 lines the ATP pocket; sequence TVGGVGKT.

The protein belongs to the LpxK family.

The catalysed reaction is a lipid A disaccharide + ATP = a lipid IVA + ADP + H(+). The protein operates within glycolipid biosynthesis; lipid IV(A) biosynthesis; lipid IV(A) from (3R)-3-hydroxytetradecanoyl-[acyl-carrier-protein] and UDP-N-acetyl-alpha-D-glucosamine: step 6/6. Transfers the gamma-phosphate of ATP to the 4'-position of a tetraacyldisaccharide 1-phosphate intermediate (termed DS-1-P) to form tetraacyldisaccharide 1,4'-bis-phosphate (lipid IVA). The polypeptide is Tetraacyldisaccharide 4'-kinase (Legionella pneumophila (strain Corby)).